A 353-amino-acid chain; its full sequence is Farnesyl pyrophosphate synthase (353 aa).

Lys57, Arg60, and Gln96 together coordinate isopentenyl diphosphate. Lys57 carries the post-translational modification N6-(2-hydroxyisobutyryl)lysine; alternate. An N6-acetyllysine; alternate modification is found at Lys57. 2 residues coordinate Mg(2+): Asp103 and Asp107. Arg112 is a dimethylallyl diphosphate binding site. Arg113 serves as a coordination point for isopentenyl diphosphate. 5 residues coordinate dimethylallyl diphosphate: Lys200, Thr201, Gln240, Lys257, and Lys266.

It belongs to the FPP/GGPP synthase family. Homodimer. Interacts with RSAD2. Requires Mg(2+) as cofactor. As to expression, testis, liver, kidney, brain and adrenal gland.

It is found in the cytoplasm. It carries out the reaction isopentenyl diphosphate + dimethylallyl diphosphate = (2E)-geranyl diphosphate + diphosphate. The catalysed reaction is isopentenyl diphosphate + (2E)-geranyl diphosphate = (2E,6E)-farnesyl diphosphate + diphosphate. Its pathway is isoprenoid biosynthesis; farnesyl diphosphate biosynthesis; farnesyl diphosphate from geranyl diphosphate and isopentenyl diphosphate: step 1/1. It participates in isoprenoid biosynthesis; geranyl diphosphate biosynthesis; geranyl diphosphate from dimethylallyl diphosphate and isopentenyl diphosphate: step 1/1. With respect to regulation, inactivated by interferon-induced RSAD2. This inactivation may result of disruption of lipid rafts at the plasma membrane, and thus have an antiviral effect since many enveloped viruses need lipid rafts to bud efficiently out of the cell. Key enzyme in isoprenoid biosynthesis which catalyzes the formation of farnesyl diphosphate (FPP), a precursor for several classes of essential metabolites including sterols, dolichols, carotenoids, and ubiquinones. FPP also serves as substrate for protein farnesylation and geranylgeranylation. Catalyzes the sequential condensation of isopentenyl pyrophosphate with the allylic pyrophosphates, dimethylallyl pyrophosphate, and then with the resultant geranylpyrophosphate to the ultimate product farnesyl pyrophosphate. This is Farnesyl pyrophosphate synthase (Fdps) from Rattus norvegicus (Rat).